A 190-amino-acid chain; its full sequence is Calcium-binding protein NCS-1 (190 aa).

Gly2 is lipidated: N-myristoyl glycine. 4 EF-hand domains span residues Ser40 to Phe58, Asp60 to Gly95, Glu96 to Met131, and Thr144 to Ile179. Ca(2+) is bound by residues Asp73, Asp75, Asn77, Tyr79, Glu84, Asp109, Asp111, Asn113, Glu120, Asp157, Asn159, Asp161, Gln163, and Glu168.

Belongs to the recoverin family.

The protein localises to the membrane. In terms of biological role, negatively regulates sporulation perhaps by controlling Ca(2+)-dependent desensitization of git3. In Schizosaccharomyces pombe (strain 972 / ATCC 24843) (Fission yeast), this protein is Calcium-binding protein NCS-1 (ncs1).